A 169-amino-acid chain; its full sequence is S-ribosylhomocysteine lyase (169 aa).

Fe cation is bound by residues His-54, His-58, and Cys-128.

It belongs to the LuxS family. In terms of assembly, homodimer. Fe cation serves as cofactor.

The enzyme catalyses S-(5-deoxy-D-ribos-5-yl)-L-homocysteine = (S)-4,5-dihydroxypentane-2,3-dione + L-homocysteine. Functionally, involved in the synthesis of autoinducer 2 (AI-2) which is secreted by bacteria and is used to communicate both the cell density and the metabolic potential of the environment. The regulation of gene expression in response to changes in cell density is called quorum sensing. Catalyzes the transformation of S-ribosylhomocysteine (RHC) to homocysteine (HC) and 4,5-dihydroxy-2,3-pentadione (DPD). In Shewanella sp. (strain ANA-3), this protein is S-ribosylhomocysteine lyase.